Reading from the N-terminus, the 569-residue chain is Proline--tRNA ligase (569 aa).

The protein belongs to the class-II aminoacyl-tRNA synthetase family. ProS type 1 subfamily. In terms of assembly, homodimer.

Its subcellular location is the cytoplasm. It carries out the reaction tRNA(Pro) + L-proline + ATP = L-prolyl-tRNA(Pro) + AMP + diphosphate. Its function is as follows. Catalyzes the attachment of proline to tRNA(Pro) in a two-step reaction: proline is first activated by ATP to form Pro-AMP and then transferred to the acceptor end of tRNA(Pro). As ProRS can inadvertently accommodate and process non-cognate amino acids such as alanine and cysteine, to avoid such errors it has two additional distinct editing activities against alanine. One activity is designated as 'pretransfer' editing and involves the tRNA(Pro)-independent hydrolysis of activated Ala-AMP. The other activity is designated 'posttransfer' editing and involves deacylation of mischarged Ala-tRNA(Pro). The misacylated Cys-tRNA(Pro) is not edited by ProRS. The sequence is that of Proline--tRNA ligase from Campylobacter hominis (strain ATCC BAA-381 / DSM 21671 / CCUG 45161 / LMG 19568 / NCTC 13146 / CH001A).